The sequence spans 203 residues: 3-isopropylmalate dehydratase small subunit (203 aa).

The protein belongs to the LeuD family. LeuD type 1 subfamily. As to quaternary structure, heterodimer of LeuC and LeuD.

It catalyses the reaction (2R,3S)-3-isopropylmalate = (2S)-2-isopropylmalate. Its pathway is amino-acid biosynthesis; L-leucine biosynthesis; L-leucine from 3-methyl-2-oxobutanoate: step 2/4. Its function is as follows. Catalyzes the isomerization between 2-isopropylmalate and 3-isopropylmalate, via the formation of 2-isopropylmaleate. The sequence is that of 3-isopropylmalate dehydratase small subunit from Pelagibacter ubique (strain HTCC1062).